A 653-amino-acid polypeptide reads, in one-letter code: Elongation factor 4 (653 aa).

Residues 1-30 (MRTPCSQHRRDRPSAIGSQLPDADTLDTRQ) are disordered. In terms of domain architecture, tr-type G spans 50-231 (AQIRNFCIIA…EVVRQVPPPQ (182 aa)). GTP contacts are provided by residues 62-67 (DHGKST) and 178-181 (NKID).

The protein belongs to the TRAFAC class translation factor GTPase superfamily. Classic translation factor GTPase family. LepA subfamily.

The protein resides in the cell membrane. It carries out the reaction GTP + H2O = GDP + phosphate + H(+). Its function is as follows. Required for accurate and efficient protein synthesis under certain stress conditions. May act as a fidelity factor of the translation reaction, by catalyzing a one-codon backward translocation of tRNAs on improperly translocated ribosomes. Back-translocation proceeds from a post-translocation (POST) complex to a pre-translocation (PRE) complex, thus giving elongation factor G a second chance to translocate the tRNAs correctly. Binds to ribosomes in a GTP-dependent manner. This chain is Elongation factor 4, found in Mycobacterium bovis (strain ATCC BAA-935 / AF2122/97).